The following is a 217-amino-acid chain: Octanoyltransferase (217 aa).

A BPL/LPL catalytic domain is found at 32–207 (SDSPDELWIV…TLSQLLGYQQ (176 aa)). Substrate is bound by residues 71–78 (RGGQVTYH), 138–140 (SLG), and 151–153 (GLA). C169 functions as the Acyl-thioester intermediate in the catalytic mechanism.

Belongs to the LipB family.

It localises to the cytoplasm. It carries out the reaction octanoyl-[ACP] + L-lysyl-[protein] = N(6)-octanoyl-L-lysyl-[protein] + holo-[ACP] + H(+). It functions in the pathway protein modification; protein lipoylation via endogenous pathway; protein N(6)-(lipoyl)lysine from octanoyl-[acyl-carrier-protein]: step 1/2. In terms of biological role, catalyzes the transfer of endogenously produced octanoic acid from octanoyl-acyl-carrier-protein onto the lipoyl domains of lipoate-dependent enzymes. Lipoyl-ACP can also act as a substrate although octanoyl-ACP is likely to be the physiological substrate. The protein is Octanoyltransferase of Shewanella sp. (strain ANA-3).